The following is a 501-amino-acid chain: Cytoplasmic tRNA 2-thiolation protein 2 (501 aa).

A compositionally biased stretch (basic and acidic residues) spans 1 to 12 (MCEMSEEYRESA). Disordered regions lie at residues 1-23 (MCEM…RLGT) and 192-214 (GVER…PTTA). Residue Cys-2 is modified to N-acetylcysteine. Ser-492 carries the phosphoserine modification.

The protein belongs to the CTU2/NCS2 family. As to quaternary structure, component of a complex at least composed of URM1, CTU2/NCS2 and CTU1/ATPBD3.

The protein localises to the cytoplasm. Its pathway is tRNA modification; 5-methoxycarbonylmethyl-2-thiouridine-tRNA biosynthesis. Its function is as follows. Plays a central role in 2-thiolation of mcm(5)S(2)U at tRNA wobble positions of tRNA(Lys), tRNA(Glu) and tRNA(Gln). May act by forming a heterodimer with CTU1/ATPBD3 that ligates sulfur from thiocarboxylated URM1 onto the uridine of tRNAs at wobble position. This chain is Cytoplasmic tRNA 2-thiolation protein 2, found in Bos taurus (Bovine).